We begin with the raw amino-acid sequence, 217 residues long: Probable ribonuclease P protein subunit 1 (217 aa).

The protein belongs to the eukaryotic/archaeal RNase P protein component 1 family.

The protein resides in the nucleus. It localises to the nucleolus. It catalyses the reaction Endonucleolytic cleavage of RNA, removing 5'-extranucleotides from tRNA precursor.. Part of ribonuclease P, a protein complex that generates mature tRNA molecules by cleaving their 5'-ends. The sequence is that of Probable ribonuclease P protein subunit 1 from Schizosaccharomyces pombe (strain 972 / ATCC 24843) (Fission yeast).